We begin with the raw amino-acid sequence, 242 residues long: Carboxy-S-adenosyl-L-methionine synthase (242 aa).

Residues Tyr-39, Gly-64 to Ser-66, Asp-89 to Asn-90, Asp-117 to Ile-118, Asn-132, and Arg-199 contribute to the S-adenosyl-L-methionine site.

It belongs to the class I-like SAM-binding methyltransferase superfamily. Cx-SAM synthase family. In terms of assembly, homodimer.

The catalysed reaction is prephenate + S-adenosyl-L-methionine = carboxy-S-adenosyl-L-methionine + 3-phenylpyruvate + H2O. Its function is as follows. Catalyzes the conversion of S-adenosyl-L-methionine (SAM) to carboxy-S-adenosyl-L-methionine (Cx-SAM). The sequence is that of Carboxy-S-adenosyl-L-methionine synthase from Aliivibrio fischeri (strain ATCC 700601 / ES114) (Vibrio fischeri).